A 775-amino-acid polypeptide reads, in one-letter code: DNA polymerase (775 aa).

This sequence belongs to the DNA polymerase type-B family.

It catalyses the reaction DNA(n) + a 2'-deoxyribonucleoside 5'-triphosphate = DNA(n+1) + diphosphate. The sequence is that of DNA polymerase (pol) from Thermococcus sp. (strain 9oN-7).